We begin with the raw amino-acid sequence, 340 residues long: Glutamyl-tRNA reductase (340 aa).

Substrate-binding positions include 49–52, serine 108, 113–115, and glutamine 119; these read TCNR and ETE. Cysteine 50 functions as the Nucleophile in the catalytic mechanism. Position 188–193 (188–193) interacts with NADP(+); sequence GAGEMS.

This sequence belongs to the glutamyl-tRNA reductase family. As to quaternary structure, homodimer.

The catalysed reaction is (S)-4-amino-5-oxopentanoate + tRNA(Glu) + NADP(+) = L-glutamyl-tRNA(Glu) + NADPH + H(+). It participates in porphyrin-containing compound metabolism; protoporphyrin-IX biosynthesis; 5-aminolevulinate from L-glutamyl-tRNA(Glu): step 1/2. Its function is as follows. Catalyzes the NADPH-dependent reduction of glutamyl-tRNA(Glu) to glutamate 1-semialdehyde (GSA). This chain is Glutamyl-tRNA reductase, found in Akkermansia muciniphila (strain ATCC BAA-835 / DSM 22959 / JCM 33894 / BCRC 81048 / CCUG 64013 / CIP 107961 / Muc).